Consider the following 297-residue polypeptide: Elongation factor Ts (297 aa).

The tract at residues 82–85 (TDFV) is involved in Mg(2+) ion dislocation from EF-Tu.

It belongs to the EF-Ts family.

It localises to the cytoplasm. Its function is as follows. Associates with the EF-Tu.GDP complex and induces the exchange of GDP to GTP. It remains bound to the aminoacyl-tRNA.EF-Tu.GTP complex up to the GTP hydrolysis stage on the ribosome. The chain is Elongation factor Ts from Azoarcus sp. (strain BH72).